A 1036-amino-acid chain; its full sequence is Non-canonical non-ribosomal peptide synthetase FUB8 (1036 aa).

An adenylation (A) domain region spans residues 21 to 343 (EIARDEPDRV…LASVVTHPDE (323 aa)). One can recognise a Carrier domain in the interval 544-621 (TTEDVVRSGI…QLAHTVWSHL (78 aa)). Position 579 is an O-(pantetheine 4'-phosphoryl)serine (serine 579). Residues 658 to 899 (LTGTTGEIGS…IPIDLLTEVI (242 aa)) form a thioester reductase (TR) domain region.

Its pathway is mycotoxin biosynthesis. Functionally, non-canonical non-ribosomal peptide synthetase; part of the gene cluster that mediates the biosynthesis of fusaric acid, a mycotoxin with low to moderate toxicity to animals and humans, but with high phytotoxic properties. L-aspartate is suggested as fusaric acid amino acid precursor that is activated and further processed to O-acetyl-L-homoserine by cluster enzymes aspartate kinase FUB3 and homoserine O-acetyltransferase FUB5, as well as enzymes of the primary metabolism. The polyketide synthase (PKS) FUB1 generates the triketide trans-2-hexenal which is presumptively released by the hydrolase FUB4 and linked to the NRPS-bound amino acid precursor by NAD(P)-dependent dehydrogenase FUB6. FUB1, FUB4, and the non-canonical NRPS Fub8 may form an enzyme complex. Further processing of the NRPS-bound intermediate might be carried out by FUB6 and the sulfhydrylase FUB7, enabling a spontaneous electrocyclization to close the carbon backbone of fusaric acid. Dihydrofusaric acid is likely to be released via reduction by the thioester reductase (TR) domain of FUB8 whereupon the final oxidation to fusaric acid may (also) be performed by the FMN-dependent dehydrogenase FUB9. The chain is Non-canonical non-ribosomal peptide synthetase FUB8 from Fusarium oxysporum f. sp. lycopersici (strain 4287 / CBS 123668 / FGSC 9935 / NRRL 34936) (Fusarium vascular wilt of tomato).